The following is a 96-amino-acid chain: Small ribosomal subunit protein bS6 (96 aa).

This sequence belongs to the bacterial ribosomal protein bS6 family.

In terms of biological role, binds together with bS18 to 16S ribosomal RNA. The sequence is that of Small ribosomal subunit protein bS6 from Natranaerobius thermophilus (strain ATCC BAA-1301 / DSM 18059 / JW/NM-WN-LF).